The chain runs to 188 residues: Elongation factor P (188 aa).

Lys-34 carries the post-translational modification N6-(3,6-diaminohexanoyl)-5-hydroxylysine.

It belongs to the elongation factor P family. May be beta-lysylated on the epsilon-amino group of Lys-34 by the combined action of EpmA and EpmB, and then hydroxylated on the C5 position of the same residue by EpmC (if this protein is present). Lysylation is critical for the stimulatory effect of EF-P on peptide-bond formation. The lysylation moiety may extend toward the peptidyltransferase center and stabilize the terminal 3-CCA end of the tRNA. Hydroxylation of the C5 position on Lys-34 may allow additional potential stabilizing hydrogen-bond interactions with the P-tRNA.

Its subcellular location is the cytoplasm. Its pathway is protein biosynthesis; polypeptide chain elongation. Functionally, involved in peptide bond synthesis. Alleviates ribosome stalling that occurs when 3 or more consecutive Pro residues or the sequence PPG is present in a protein, possibly by augmenting the peptidyl transferase activity of the ribosome. Modification of Lys-34 is required for alleviation. This Methylococcus capsulatus (strain ATCC 33009 / NCIMB 11132 / Bath) protein is Elongation factor P.